The primary structure comprises 354 residues: Arginase-2, mitochondrial (354 aa).

Residues 1 to 22 (MSLRSHLSRLLRTQVHSVRKKS) constitute a mitochondrion transit peptide. Residues histidine 120, aspartate 143, histidine 145, and aspartate 147 each contribute to the Mn(2+) site. Residues 145 to 149 (HADIN), 156 to 158 (SGN), and aspartate 202 each bind substrate. Residues aspartate 251 and aspartate 253 each coordinate Mn(2+). Substrate is bound by residues threonine 265 and glutamate 296. The disordered stretch occupies residues 332 to 354 (IVYDQLPTPSSPDESESEERVRI).

The protein belongs to the arginase family. Homotrimer. Mn(2+) is required as a cofactor.

Its subcellular location is the mitochondrion. The enzyme catalyses L-arginine + H2O = urea + L-ornithine. Its pathway is nitrogen metabolism; urea cycle; L-ornithine and urea from L-arginine: step 1/1. In terms of biological role, may play a role in the regulation of extra-urea cycle arginine metabolism and also in down-regulation of nitric oxide synthesis. Extrahepatic arginase functions to regulate L-arginine bioavailability to nitric oxid synthase (NOS). Arginine metabolism is a critical regulator of innate and adaptive immune responses. Seems to be involved in negative regulation of the survival capacity of activated T cells. May suppress inflammation-related signaling in asthmatic airway epithelium. May play a role in promoting prenatal immune suppression. Regulates RPS6KB1 signaling, which promotes endothelial cell senescence and inflammation and implicates NOS3/eNOS dysfunction. Can inhibit endothelial autophagy independently of its enzymatic activity implicating mTORC2 signaling. Involved in vascular smooth muscle cell senescence and apoptosis independently of its enzymatic activity. The polypeptide is Arginase-2, mitochondrial (ARG2) (Bos taurus (Bovine)).